The sequence spans 335 residues: Aspartate carbamoyltransferase catalytic subunit (335 aa).

2 residues coordinate carbamoyl phosphate: Arg-81 and Thr-82. An L-aspartate-binding site is contributed by Lys-109. Residues Arg-131, His-159, and Gln-162 each contribute to the carbamoyl phosphate site. Residues Arg-192 and Arg-246 each coordinate L-aspartate. Positions 287 and 288 each coordinate carbamoyl phosphate.

Belongs to the aspartate/ornithine carbamoyltransferase superfamily. ATCase family. Heterododecamer (2C3:3R2) of six catalytic PyrB chains organized as two trimers (C3), and six regulatory PyrI chains organized as three dimers (R2).

It carries out the reaction carbamoyl phosphate + L-aspartate = N-carbamoyl-L-aspartate + phosphate + H(+). It participates in pyrimidine metabolism; UMP biosynthesis via de novo pathway; (S)-dihydroorotate from bicarbonate: step 2/3. In terms of biological role, catalyzes the condensation of carbamoyl phosphate and aspartate to form carbamoyl aspartate and inorganic phosphate, the committed step in the de novo pyrimidine nucleotide biosynthesis pathway. In Caulobacter sp. (strain K31), this protein is Aspartate carbamoyltransferase catalytic subunit.